A 100-amino-acid chain; its full sequence is Urease subunit gamma (100 aa).

This sequence belongs to the urease gamma subunit family. As to quaternary structure, heterotrimer of UreA (gamma), UreB (beta) and UreC (alpha) subunits. Three heterotrimers associate to form the active enzyme.

The protein localises to the cytoplasm. It catalyses the reaction urea + 2 H2O + H(+) = hydrogencarbonate + 2 NH4(+). It participates in nitrogen metabolism; urea degradation; CO(2) and NH(3) from urea (urease route): step 1/1. The sequence is that of Urease subunit gamma from Photorhabdus laumondii subsp. laumondii (strain DSM 15139 / CIP 105565 / TT01) (Photorhabdus luminescens subsp. laumondii).